A 352-amino-acid polypeptide reads, in one-letter code: Chymopapain (352 aa).

An N-terminal signal peptide occupies residues methionine 1–isoleucine 18. Positions isoleucine 19–asparagine 134 are cleaved as a propeptide — activation peptide. Residue asparagine 86 is glycosylated (N-linked (GlcNAc...) asparagine). 3 cysteine pairs are disulfide-bonded: cysteine 156–cysteine 197, cysteine 190–cysteine 229, and cysteine 287–cysteine 338. The active site involves cysteine 159. Active-site residues include histidine 293 and asparagine 313.

The protein belongs to the peptidase C1 family.

It carries out the reaction Specificity similar to that of papain.. In terms of biological role, cysteine proteinase with a high level of diversity in substrate specificity. This chain is Chymopapain, found in Carica papaya (Papaya).